The primary structure comprises 581 residues: Pentatricopeptide repeat-containing protein At1g34160 (581 aa).

PPR repeat units lie at residues 67-101 (LTND…SSSS), 108-142 (DALT…GLSA), 143-173 (DSLL…MPVR), 174-208 (DVAS…GIRR), 209-239 (SEVT…YSND), 240-270 (NVIV…FTGK), 272-306 (SVVT…GIKP), 307-341 (DDVS…GVER), and 342-372 (NMKH…MSMI). Positions 377-452 (LWQSLLGASE…IPGLSYIEAK (76 aa)) are type E motif. Residues 453–483 (GTIHEFYNSDKSHEQWREIYEKIDEIRFKIR) form a type E(+) motif region. The type DYW motif stretch occupies residues 484–581 (EDGYVAQTGL…DGSCSCRDFW (98 aa)).

The protein belongs to the PPR family. PCMP-H subfamily.

The chain is Pentatricopeptide repeat-containing protein At1g34160 (PCMP-H68) from Arabidopsis thaliana (Mouse-ear cress).